Here is a 309-residue protein sequence, read N- to C-terminus: ADP-L-glycero-D-manno-heptose-6-epimerase (309 aa).

Residues 10-11, 31-32, Lys38, Lys53, 75-79, and Asn92 contribute to the NADP(+) site; these read MI, DN, and EGACS. The active-site Proton acceptor is the Tyr139. Position 143 (Lys143) interacts with NADP(+). Residue Asn168 participates in substrate binding. Residues Val169 and Lys177 each coordinate NADP(+). Lys177 serves as the catalytic Proton acceptor. Residues Ser179, His186, 200–203, Arg208, and Tyr271 each bind substrate; that span reads FDGS.

The protein belongs to the NAD(P)-dependent epimerase/dehydratase family. HldD subfamily. In terms of assembly, homopentamer. Requires NADP(+) as cofactor.

It carries out the reaction ADP-D-glycero-beta-D-manno-heptose = ADP-L-glycero-beta-D-manno-heptose. Its pathway is nucleotide-sugar biosynthesis; ADP-L-glycero-beta-D-manno-heptose biosynthesis; ADP-L-glycero-beta-D-manno-heptose from D-glycero-beta-D-manno-heptose 7-phosphate: step 4/4. Its function is as follows. Catalyzes the interconversion between ADP-D-glycero-beta-D-manno-heptose and ADP-L-glycero-beta-D-manno-heptose via an epimerization at carbon 6 of the heptose. This is ADP-L-glycero-D-manno-heptose-6-epimerase from Serratia proteamaculans (strain 568).